The chain runs to 137 residues: MADRRRGAARGGAARPRRRERKNIPRGRAYIHATFNNTIVTLTDPNGNVVAWSSAGSSGFKGTRKSTPYAAQVAAENAARKAMEHGMRQVDVYVKGAGAGREMAIRALAAAGLQVMSITDITPVPHNGCRPPKRRRT.

Positions 1–25 (MADRRRGAARGGAARPRRRERKNIP) are disordered. The segment covering 15–25 (RPRRRERKNIP) has biased composition (basic residues).

It belongs to the universal ribosomal protein uS11 family. Part of the 30S ribosomal subunit. Interacts with proteins S7 and S18. Binds to IF-3.

Functionally, located on the platform of the 30S subunit, it bridges several disparate RNA helices of the 16S rRNA. Forms part of the Shine-Dalgarno cleft in the 70S ribosome. This chain is Small ribosomal subunit protein uS11, found in Thermomicrobium roseum (strain ATCC 27502 / DSM 5159 / P-2).